Reading from the N-terminus, the 330-residue chain is Ketol-acid reductoisomerase (NADP(+)) (330 aa).

In terms of domain architecture, KARI N-terminal Rossmann spans 1–181 (MNAYYEQDAD…GGTKAGVIET (181 aa)). NADP(+) contacts are provided by residues 24–27 (FGSQ), R47, S50, S52, and 82–85 (DQYQ). H107 is a catalytic residue. G133 contacts NADP(+). The KARI C-terminal knotted domain maps to 182–327 (TFKNETETDL…AKLRDMMSWL (146 aa)). D190, E194, E226, and E230 together coordinate Mg(2+). Residue S251 participates in substrate binding.

This sequence belongs to the ketol-acid reductoisomerase family. It depends on Mg(2+) as a cofactor.

It carries out the reaction (2R)-2,3-dihydroxy-3-methylbutanoate + NADP(+) = (2S)-2-acetolactate + NADPH + H(+). It catalyses the reaction (2R,3R)-2,3-dihydroxy-3-methylpentanoate + NADP(+) = (S)-2-ethyl-2-hydroxy-3-oxobutanoate + NADPH + H(+). It participates in amino-acid biosynthesis; L-isoleucine biosynthesis; L-isoleucine from 2-oxobutanoate: step 2/4. Its pathway is amino-acid biosynthesis; L-valine biosynthesis; L-valine from pyruvate: step 2/4. Functionally, involved in the biosynthesis of branched-chain amino acids (BCAA). Catalyzes an alkyl-migration followed by a ketol-acid reduction of (S)-2-acetolactate (S2AL) to yield (R)-2,3-dihydroxy-isovalerate. In the isomerase reaction, S2AL is rearranged via a Mg-dependent methyl migration to produce 3-hydroxy-3-methyl-2-ketobutyrate (HMKB). In the reductase reaction, this 2-ketoacid undergoes a metal-dependent reduction by NADPH to yield (R)-2,3-dihydroxy-isovalerate. This is Ketol-acid reductoisomerase (NADP(+)) from Chlorobium phaeobacteroides (strain BS1).